Consider the following 504-residue polypeptide: Maturase K (504 aa).

The protein belongs to the intron maturase 2 family. MatK subfamily.

The protein localises to the plastid. It localises to the chloroplast. In terms of biological role, usually encoded in the trnK tRNA gene intron. Probably assists in splicing its own and other chloroplast group II introns. The protein is Maturase K of Lepidium virginicum (Virginia pepperweed).